The chain runs to 469 residues: MSLDIKKPNITKTKKKKTGFVVKMQLNNNRGGNKRNIFIFFFFRNYYTWILWFCLSLYFFTSYFSVEDQSSPSSIRLLSNHKTSSSLPSRALIESSAIKTTSIGLFTGMKIYVYDLPASYNDDWVTASDRCASHLFAAEVAIHRALLSSDVRTLDPDEADYFFVPVYVSCNFSTSNGFPSLSHARSLLSSAVDFLSDHYPFWNRSQGSDHVFVASHDFGACFHAMEDMAIEEGIPKFMKRSIILQTFGVKYKHPCQEVEHVVIPPYIPPESVQKAIEKAPVNGRRDIWAFFRGKMEVNPKNISGRFYSKGVRTAILKKFGGRRRFYLNRHRFAGYRSEIVRSVFCLCPLGWAPWSPRLVESAVLGCVPVVIADGIQLPFSETVQWPEISLTVAEKDVRNLRKVLEHVAATNLSAIQRNLHEPVFKRALLYNVPMKEGDATWHILESLWRKLDDRSYRRSRVLSQREVDM.

At 1–36 (MSLDIKKPNITKTKKKKTGFVVKMQLNNNRGGNKRN) the chain is on the cytoplasmic side. Residues 37–57 (IFIFFFFRNYYTWILWFCLSL) form a helical; Signal-anchor for type II membrane protein membrane-spanning segment. Residues 58 to 469 (YFFTSYFSVE…RVLSQREVDM (412 aa)) are Lumenal-facing. N-linked (GlcNAc...) asparagine glycans are attached at residues N171, N203, N301, and N411.

The protein belongs to the glycosyltransferase 47 family. Expressed in xylem cells in stems and in roots.

The protein localises to the golgi apparatus membrane. Involved in the synthesis of the hemicellulose glucuronoxylan, a major component of secondary cell walls. Probably involved in the synthesis of the glycosyl sequence at the glucuronoxylan reducing end. The polypeptide is Probable glucuronoxylan glucuronosyltransferase F8H (F8H) (Arabidopsis thaliana (Mouse-ear cress)).